A 247-amino-acid polypeptide reads, in one-letter code: Triosephosphate isomerase (247 aa).

Residues Asn-10 and Lys-12 each coordinate substrate. The Electrophile role is filled by His-94. The active-site Proton acceptor is the Glu-164.

The protein belongs to the triosephosphate isomerase family. Homodimer.

The catalysed reaction is D-glyceraldehyde 3-phosphate = dihydroxyacetone phosphate. It participates in carbohydrate biosynthesis; gluconeogenesis. Its pathway is carbohydrate degradation; glycolysis; D-glyceraldehyde 3-phosphate from glycerone phosphate: step 1/1. This is Triosephosphate isomerase (Tpi) from Culex tarsalis (Encephalitis mosquito).